We begin with the raw amino-acid sequence, 712 residues long: Voltage-gated chloride channel TMC4 (712 aa).

The tract at residues 1–39 is disordered; sequence MEENPTLESEAWGSSRGWLAPREARGAPCSSPGPSLSSV. Residues 1 to 168 are Extracellular-facing; the sequence is MEENPTLESE…GTESYFSLLR (168 aa). The N-linked (GlcNAc...) asparagine glycan is linked to Asn107. A helical transmembrane segment spans residues 169-189; it reads FLLLLNVLASVLMACMTLLPT. Residues 190–249 are Cytoplasmic-facing; the sequence is WLGGAPPGPPGPDISSPCGSYNPHSQGLVTFATQLFNLLSGEGYLEWSPLFYGFYPPRPR. A helical transmembrane segment spans residues 250-270; that stretch reads LAVTYLCWAFAVGLICLLLIL. The Extracellular portion of the chain corresponds to 271 to 348; the sequence is HRSVSGLKQT…GQQARVWLVR (78 aa). The chain crosses the membrane as a helical span at residues 349-369; sequence VLLNLLVVALLGAAFYGVYWA. The Cytoplasmic portion of the chain corresponds to 370 to 394; sequence TGCTVELQEMPLVQELPLLKLGVNY. A helical membrane pass occupies residues 395 to 415; the sequence is LPSIFIAGVNFVLPPVFKLIA. At 416-425 the chain is on the extracellular side; sequence PLEGYTRSRQ. Residues 426–446 traverse the membrane as a helical segment; it reads IVFILLRTVFLRLASLVVLLF. The Cytoplasmic segment spans residues 447–483; it reads SLWNQITCGGDSEAEDCKTCGYNYKQLPCWETVLGQE. Residues 484–504 form a helical membrane-spanning segment; that stretch reads MYKLLLFDLLTVLAVALLIQF. Residues 505-542 lie on the Extracellular side of the membrane; that stretch reads PRKLLCGLCPGALGRLAGTQEFQVPDEVLGLIYAQTVV. A helical transmembrane segment spans residues 543–565; sequence WVGSFFCPLLPLLNTVKFLLLFY. The Cytoplasmic segment spans residues 566–592; the sequence is LKKLTLFSTCSPAARTFRASAANFFFP. The chain crosses the membrane as a helical span at residues 593–613; the sequence is LVLLLGLAISSVPLLYSIFLI. Over 614–654 the chain is Extracellular; the sequence is PPSKLCGPFRGQSSIWAQIPESISSLPETTQNFLFFLGTQA. A helical transmembrane segment spans residues 655 to 677; that stretch reads FAVPLLLISSILMAYTVALANSY. The Cytoplasmic segment spans residues 678-712; that stretch reads GRLISELKRQRQTEAQNKVFLARRAVALTSTKPAL.

It belongs to the TMC family.

It is found in the membrane. The enzyme catalyses chloride(in) = chloride(out). Functionally, voltage-gated chloride channel involved in high-concentration salt taste sensation. Depolarization induced by high NaCl concentration may trigger the activation of TMC4-mediated chloride influx into taste bud cells, helping the return to resting potential. Also allows permeation of organic anions including gluconate, but their current amplitudes at positive potentials are less than that of chloride. Involved in pH and temperature-dependent modulation of salty taste. This chain is Voltage-gated chloride channel TMC4, found in Homo sapiens (Human).